Consider the following 1215-residue polypeptide: MSRRLSLPAGAPVTVAVSPVRSPGGDAVVRRGSGLTSPVPRHSLGSSTATLQVSPVRRSGGSRYLGASRDGGADESAEFVHYTVHIPPTPDRATASVASEAEAAAEAEEVHRPQRSYISGTIFTGGLNCATRGHVLNFSGEGGATAASRAAASGNMSCKMRGCDMPAFLNGGRPPCDCGFMICKECYAECAAGNCPGCKEAFSAGSDTDESDSVTDDDDDEAVSSSEERDQLPLTSMARKFSVVHSMKVPGAAANGNGKPAEFDHARWLFETKGTYGYGNALWPKDGHAHSGAGFVAADEPPNFGARCRRPLTRKTSVSQAILSPYRLLIAIRLVALGFFLAWRIRHPNPEAVWLWAMSVACEVWFAFSWLLDSLPKLCPVHRAADLAVLAERFESPTARNPKGRSDLPGIDVFVTSADPEKEPPLVTANTILSILAADYPVEKLACYLSDDGGALLSFEALAETASFARTWVPFCRKHGVEPRCPEAYFGQKRDFLKNKVRVDFVRERRKVKREYDEFKVRVNSLPEAIRRRSDAYNAGEELRARRRQQEEAAAAAAAGNGELGAAAVETAAVKATWMSDGSHWPGTWTCPAADHARGDHAGIIQAMLAPPTSEPVMGGEAAECGGLIDTTGVDVRLPMLVYVSREKRPGYDHNKKAGAMNALVRTSAIMSNGPFILNLDCDHYVHNSSALREGMCFMLDRGGDRVCFVQFPQRFEGVDPSDRYANHNLVFFDVSMRAMDGLQGPMYVGTGCVFRRTALYGFSPPRATEHHGWLGRRKIKLFLTKKKSMGKKTDRAEDDTEMMLPPIEDDDGGADIEASAMLPKRFGGSATFVASIPVAEYQGRLLQDTPGCHHGRPAGALAVPREPLDAATVAEAIGVISCFYEEKTEWGRRIGWIYGSVTEDVVTGYRMHNRGWRSVYCVTPRRDAFRGTAPINLTDRLHQVLRWATGSVEIFFSRNNALFASPRMKLLQRVAYFNAGMYPFTSVFLLAYCLLPAVSLFSGKFIVQRLSATFLAFLLVITLTLCLLALLEIKWSGITLHEWWRNEQFWVIGGTSAHPAAVLQGLLKVIAGVDISFTLTSKPGNGGGDGGVGGEGNDDEAFAELYEVRWSYLMVPPVTIMMVNAVAIAVAAARTLYSEFPQWSKLLGGAFFSFWVLCHLYPFAKGLLGRRGRVPTIVFVWSGLISMIISLLWVYINPPAGARERIGGGGFSFP.

Disordered regions lie at residues 24 to 46 (GGDA…SLGS) and 206 to 231 (SDTD…ERDQ). Positions 207-222 (DTDESDSVTDDDDDEA) are enriched in acidic residues. 2 helical membrane-spanning segments follow: residues 321–341 (AILS…GFFL) and 352–372 (AVWL…SWLL). Active-site residues include Asp452 and Asp905. 6 helical membrane passes run 988–1008 (VFLL…KFIV), 1014–1034 (TFLA…LLEI), 1060–1080 (PAAV…SFTL), 1114–1134 (LMVP…VAAA), 1147–1167 (LLGG…FAKG), and 1177–1197 (TIVF…WVYI).

The protein belongs to the glycosyltransferase 2 family. Plant cellulose synthase-like D subfamily.

The protein localises to the golgi apparatus membrane. In terms of biological role, thought to be a Golgi-localized beta-glycan synthase that polymerize the backbones of noncellulosic polysaccharides (hemicelluloses) of plant cell wall. The protein is Cellulose synthase-like protein D4 (CSLD4) of Oryza sativa subsp. japonica (Rice).